The following is a 510-amino-acid chain: Transcriptional regulatory protein GAT1 (510 aa).

The residue at position 167 (Ser-167) is a Phosphoserine. Residues 220–256 (NHSHNSSHNNNSPSIANNTNANTNTNTSASTNTNSPL) show a composition bias toward low complexity. Disordered stretches follow at residues 220–311 (NHSH…IKCS) and 358–383 (QRSS…AAGK). Phosphoserine is present on residues Ser-262 and Ser-270. Basic residues predominate over residues 274 to 287 (SSVRKKKPALKKIK). The segment covering 294–306 (SSATPPSNTSSNP) has biased composition (low complexity). The GATA-type zinc-finger motif lies at 310–334 (CSNCTTSTTPLWRKDPKGLPLCNAC). Thr-369 is modified (phosphothreonine). Phosphoserine occurs at positions 399 and 418.

Its subcellular location is the nucleus. In terms of biological role, positive regulator of multiple nitrogen catabolic genes. The chain is Transcriptional regulatory protein GAT1 (GAT1) from Saccharomyces cerevisiae (strain ATCC 204508 / S288c) (Baker's yeast).